The following is a 1479-amino-acid chain: Type VII secretion system protein EssC (1479 aa).

Topologically, residues 1-229 (MHKLIIKYNK…RPPQPIQKNN (229 aa)) are cytoplasmic. A helical transmembrane segment spans residues 230 to 252 (TVIWRSIIPPLVMIALTVVIFLV). At 253–256 (RPIG) the chain is on the extracellular side. The chain crosses the membrane as a helical span at residues 257–279 (IYILMMIGMSTVTIVFGITTYFS). Over 280-1479 (EKKKYNKDVE…QAYQKIRWFK (1200 aa)) the chain is Cytoplasmic. 2 consecutive FtsK domains span residues 652–846 (DDIL…QDSN) and 997–1183 (QGPM…SEVS). Residues 672–679 (GTTGSGKS) and 1014–1021 (GSPGYGRT) contribute to the ATP site.

The protein belongs to the EssC family. Homooligomer. Interacts with EsaE.

The protein localises to the cell membrane. Component of the type VII secretion system (Ess). Required for the secretion of substrates including EsxA and EsxB. However, unable to support secretion of the substrate protein EsxC. The chain is Type VII secretion system protein EssC from Staphylococcus aureus (strain Mu50 / ATCC 700699).